The following is an 829-amino-acid chain: MDKEKSDPSCKSSDLKISNISIQVVSVPGKLPGRRPPRKPIGKPRPRKQPKKRAPFWNVQNKIILFTVFLFILAVTAWTLLWLYISKTESKDAFYFVGMFRITNIEFLPEYRQKESREFLSMAKTVQQVVNLVYTTSAFSKFYKQSVVADVSSNNKGGLLVHFWIVFVMPHAKGHIFCEECVAAILKDSIQTSIINRTSVGSLQGLAVDMDSVVLNAGLRSDYSSAVGSDNGCSRYLYADHLTLRYPLEISATSGQLMCHFKLVAIVGYLIRLSIESIQLEADNCITDSLTVYDSLLPIRSAILYRICEPTRTLMSFVSTNNLMLVILKSPYVRRLAGIRAYFEVIPEQKCESTILVKEINSFEGKISSPYYPSYYPPKCKCTWTFQTSLSTLGIALKFYNYSITKKSAKGCEHGWWEINEHMYCGSYMDHETIFRVPSPLVHIQLQCSSRLSDKPLLVEYGGYNISQPCPAGSFRCSSGLCVPQAQRCDGVNDCFDESDELFCVTVKPACNSSSFRQHGPLVCDGFRDCEDGQDEQNCTRSIPCTSRTFKCGNDICFRKQNAQCDGIVDCPDGSDEEGCGCSRSSSFLHRIVGGSDSQEGTWPWQVSLHFVGSAYCGASVISREWLLSAAHCFHGNRLSDPTPWTAHLGMYVQGNAKFISPVRRIVVHEYYNSQTFDYDIALLQLSIAWPETLKQLIQPICIPPAGQKVRSGEKCWVTGWGRRHEADSKGSPVLQQAEVELIDQTVCVSTYGIITSRMLCAGVMSGKSDACKGDSGGPLSCRRKSDGKWILTGIVSWGHGCGRPNFPGVYTRVSSFVPWIHKYVPSLL.

The Cytoplasmic portion of the chain corresponds to 1 to 62 (MDKEKSDPSC…RAPFWNVQNK (62 aa)). The interval 26–52 (SVPGKLPGRRPPRKPIGKPRPRKQPKK) is disordered. The segment covering 32–52 (PGRRPPRKPIGKPRPRKQPKK) has biased composition (basic residues). The chain crosses the membrane as a helical; Signal-anchor for type II membrane protein span at residues 63 to 83 (IILFTVFLFILAVTAWTLLWL). Topologically, residues 84–829 (YISKTESKDA…WIHKYVPSLL (746 aa)) are extracellular. The SEA domain maps to 92–220 (DAFYFVGMFR…DSVVLNAGLR (129 aa)). 3 disulfide bridges follow: Cys-233–Cys-259, Cys-285–Cys-308, and Cys-351–Cys-382. CUB domains lie at 233 to 346 (CSRY…FEVI) and 351 to 467 (CEST…YNIS). Asn-401 and Asn-465 each carry an N-linked (GlcNAc...) asparagine glycan. 3 LDL-receptor class A domains span residues 469-505 (PCPAGSFRCSSGLCVPQAQRCDGVNDCFDESDELFCV), 503-540 (FCVTVKPACNSSSFRQHGPLVCDGFRDCEDGQDEQNCT), and 544-581 (PCTSRTFKCGNDICFRKQNAQCDGIVDCPDGSDEEGCG). 9 cysteine pairs are disulfide-bonded: Cys-470/Cys-482, Cys-477/Cys-495, Cys-489/Cys-504, Cys-511/Cys-530, Cys-524/Cys-539, Cys-545/Cys-557, Cys-552/Cys-571, Cys-565/Cys-580, and Cys-617/Cys-633. Residues 592-826 (IVGGSDSQEG…FVPWIHKYVP (235 aa)) form the Peptidase S1 domain. Catalysis depends on charge relay system residues His-632 and Asp-680. Cystine bridges form between Cys-716–Cys-782, Cys-748–Cys-761, and Cys-772–Cys-802. Catalysis depends on Ser-776, which acts as the Charge relay system.

The protein belongs to the peptidase S1 family. As to quaternary structure, forms a heterodimer with SERPINA5. In terms of processing, N-glycosylated. In terms of tissue distribution, expressed in brain, eye, testis, skin, epididymis and salivary gland with lower levels in heart, skeletal muscle, thymus, ovary, prostate and uterus.

It localises to the cell membrane. In terms of biological role, serine protease which preferentially hydrolyzes peptides with Arg at the P1 position. This chain is Transmembrane protease serine 7 (Tmprss7), found in Mus musculus (Mouse).